A 61-amino-acid chain; its full sequence is Small ribosomal subunit protein uS14 (61 aa).

Zn(2+) contacts are provided by Cys-24, Cys-27, Cys-40, and Cys-43.

The protein belongs to the universal ribosomal protein uS14 family. Zinc-binding uS14 subfamily. As to quaternary structure, part of the 30S ribosomal subunit. Contacts proteins S3 and S10. Zn(2+) is required as a cofactor.

Its function is as follows. Binds 16S rRNA, required for the assembly of 30S particles and may also be responsible for determining the conformation of the 16S rRNA at the A site. This is Small ribosomal subunit protein uS14 from Ureaplasma parvum serovar 3 (strain ATCC 27815 / 27 / NCTC 11736).